We begin with the raw amino-acid sequence, 279 residues long: Large ribosomal subunit protein mL46 (279 aa).

At Lys-230 the chain carries N6-acetyllysine.

It belongs to the mitochondrion-specific ribosomal protein mL46 family. Component of the mitochondrial large ribosomal subunit (mt-LSU). Mature mammalian 55S mitochondrial ribosomes consist of a small (28S) and a large (39S) subunit. The 28S small subunit contains a 12S ribosomal RNA (12S mt-rRNA) and 30 different proteins. The 39S large subunit contains a 16S rRNA (16S mt-rRNA), a copy of mitochondrial valine transfer RNA (mt-tRNA(Val)), which plays an integral structural role, and 52 different proteins. mL46 is located at the central protuberance.

It is found in the mitochondrion. This is Large ribosomal subunit protein mL46 (MRPL46) from Homo sapiens (Human).